The primary structure comprises 518 residues: Protein nucleotidyltransferase YdiU (518 aa).

ATP contacts are provided by glycine 109, glycine 111, arginine 112, lysine 131, aspartate 143, glycine 144, arginine 194, and arginine 201. The Proton acceptor role is filled by aspartate 270. 2 residues coordinate Mg(2+): asparagine 271 and aspartate 280. Position 280 (aspartate 280) interacts with ATP.

It belongs to the SELO family. It depends on Mg(2+) as a cofactor. The cofactor is Mn(2+).

The enzyme catalyses L-seryl-[protein] + ATP = 3-O-(5'-adenylyl)-L-seryl-[protein] + diphosphate. It carries out the reaction L-threonyl-[protein] + ATP = 3-O-(5'-adenylyl)-L-threonyl-[protein] + diphosphate. It catalyses the reaction L-tyrosyl-[protein] + ATP = O-(5'-adenylyl)-L-tyrosyl-[protein] + diphosphate. The catalysed reaction is L-histidyl-[protein] + UTP = N(tele)-(5'-uridylyl)-L-histidyl-[protein] + diphosphate. The enzyme catalyses L-seryl-[protein] + UTP = O-(5'-uridylyl)-L-seryl-[protein] + diphosphate. It carries out the reaction L-tyrosyl-[protein] + UTP = O-(5'-uridylyl)-L-tyrosyl-[protein] + diphosphate. Its function is as follows. Nucleotidyltransferase involved in the post-translational modification of proteins. It can catalyze the addition of adenosine monophosphate (AMP) or uridine monophosphate (UMP) to a protein, resulting in modifications known as AMPylation and UMPylation. In Paraburkholderia xenovorans (strain LB400), this protein is Protein nucleotidyltransferase YdiU.